The following is a 638-amino-acid chain: Chaperone protein DnaK (638 aa).

Thr-198 bears the Phosphothreonine; by autocatalysis mark. Residues 602–638 are disordered; that stretch reads QAKSQAQGGEEAQAKDAGQSNDDVVDAEFEEVKDDKK. A compositionally biased stretch (acidic residues) spans 624–638; the sequence is DVVDAEFEEVKDDKK.

Belongs to the heat shock protein 70 family.

Acts as a chaperone. The polypeptide is Chaperone protein DnaK (Shewanella denitrificans (strain OS217 / ATCC BAA-1090 / DSM 15013)).